The primary structure comprises 105 residues: Ketoisovalerate oxidoreductase subunit VorD (105 aa).

2 4Fe-4S ferredoxin-type domains span residues 44–73 and 74–103; these read FKPV…IKPD and GYVA…MIKE. Residues Cys-53, Cys-56, Cys-59, Cys-63, Cys-83, Cys-86, Cys-89, and Cys-93 each contribute to the [4Fe-4S] cluster site.

Heterotetramer of one alpha, one beta, one delta and one gamma chain. Requires [4Fe-4S] cluster as cofactor.

The enzyme catalyses 3-methyl-2-oxobutanoate + 2 oxidized [2Fe-2S]-[ferredoxin] + CoA = 2-methylpropanoyl-CoA + 2 reduced [2Fe-2S]-[ferredoxin] + CO2 + H(+). This is Ketoisovalerate oxidoreductase subunit VorD (vorD) from Pyrococcus furiosus (strain ATCC 43587 / DSM 3638 / JCM 8422 / Vc1).